A 523-amino-acid chain; its full sequence is Synaptotagmin-10 (523 aa).

Residues 1-55 (MSFHKEDGVNSLCQKALHIVTELCFAGQVEWEKCSGIFPRDRGSQGGSSTDISVS) are Vesicular-facing. The tract at residues 13-35 (CQKALHIVTELCFAGQVEWEKCS) is cysteine motif. The helical transmembrane segment at 56–76 (LLAVVVSFCGLALLVVSLFVF) threads the bilayer. The Cytoplasmic segment spans residues 77–523 (WKLCWPCWKS…CPSPKPPSTP (447 aa)). T136 is modified (phosphothreonine). C2 domains follow at residues 231–352 (ICGK…TVWK) and 363–496 (DLGE…THWH). Ca(2+) contacts are provided by D262, D268, D320, F321, D322, S325, D328, D394, D400, D454, and D456.

Belongs to the synaptotagmin family. In terms of assembly, homodimer; disulfide-linked via the cysteine motif. Can also form heterodimers with SYT3, SYT6, SYT7 and SYT9. Ca(2+) serves as cofactor. As to expression, expressed only in pancreas, lung and kidney.

It is found in the cytoplasmic vesicle. Its subcellular location is the secretory vesicle membrane. Functionally, ca(2+) sensor specifically required for the Ca(2+)-dependent exocytosis of secretory vesicles containing IGF1 in neurons of the olfactory bulb. Exocytosis of IGF1 is required for sensory perception of smell. Not involved in Ca(2+)-dependent synaptic vesicle exocytosis. Acts through Ca(2+) and phospholipid binding to the C2 domain: Ca(2+) induces binding of the C2-domains to phospholipid membranes and to assembled SNARE-complexes; both actions contribute to triggering exocytosis. The protein is Synaptotagmin-10 (SYT10) of Homo sapiens (Human).